An 865-amino-acid polypeptide reads, in one-letter code: cGMP-specific 3',5'-cyclic phosphodiesterase (865 aa).

S92 is subject to Phosphoserine. GAF domains follow at residues 154 to 304 (DVTA…GIVL) and 336 to 493 (SLEV…GLGI). A PDEase domain is found at 526–850 (ETRELQALSA…QKWQALAEQQ (325 aa)). The Proton donor role is filled by H603. Residues H607, H643, D644, and D754 each contribute to the Zn(2+) site. D644 serves as a coordination point for Mg(2+). Q807 serves as a coordination point for 3',5'-cyclic GMP.

The protein belongs to the cyclic nucleotide phosphodiesterase family. The cofactor is Zn(2+). Requires Mg(2+) as cofactor. In terms of processing, phosphorylation is regulated by binding of cGMP to the two allosteric sites. Phosphorylation by PRKG1 leads to its activation.

The catalysed reaction is 3',5'-cyclic GMP + H2O = GMP + H(+). It participates in purine metabolism; 3',5'-cyclic GMP degradation; GMP from 3',5'-cyclic GMP: step 1/1. Its function is as follows. Plays a role in signal transduction by regulating the intracellular concentration of cyclic nucleotides. This phosphodiesterase catalyzes the specific hydrolysis of cGMP to 5'-GMP. Specifically regulates nitric-oxide-generated cGMP. This Mus musculus (Mouse) protein is cGMP-specific 3',5'-cyclic phosphodiesterase (Pde5a).